A 402-amino-acid chain; its full sequence is Candidapepsin-1 (402 aa).

Positions 1 to 25 form a signal peptide, or 18, or 21; it reads MVAIVTLTRQVLLTIALALFAQGAA. A propeptide spans 26-62 (activation peptide); that stretch reads IPEEAAKRDDNPGFVALDFDVLRKPLNLTEALLREKR. N52 carries an N-linked (GlcNAc...) asparagine glycan. In terms of domain architecture, Peptidase A1 spans 76 to 389; the sequence is YASKVSVGSN…NLDANTISIA (314 aa). The active site involves D94. A disulfide bridge links C109 with C115. The active site involves D282. Residues C320 and C354 are joined by a disulfide bond.

Belongs to the peptidase A1 family. O-glycosylated.

It localises to the secreted. It carries out the reaction Preferential cleavage at the carboxyl of hydrophobic amino acids, but fails to cleave 15-Leu-|-Tyr-16, 16-Tyr-|-Leu-17 and 24-Phe-|-Phe-25 of insulin B chain. Activates trypsinogen, and degrades keratin.. The polypeptide is Candidapepsin-1 (SAPP1) (Candida parapsilosis (Yeast)).